The following is a 767-amino-acid chain: ATP-dependent rRNA helicase SPB4 (767 aa).

Positions 28-56 (WTKLTPPLTPWVVSLLSDLGFGQMTPVQA) match the Q motif motif. A Helicase ATP-binding domain is found at 59–291 (IPLFVSHKDV…RIGLRNPVRV (233 aa)). 72–79 (AVTGSGKT) is a binding site for ATP. A disordered region spans residues 132–176 (HVQAQQQQDQDEQDEQDEQEAQSDSDTDPDASTALNNKRKSSNHL). A compositionally biased stretch (acidic residues) spans 140–160 (DQDEQDEQDEQEAQSDSDTDP). Positions 239-242 (DEAD) match the DEAD box motif. The Helicase C-terminal domain occupies 330–507 (QLARIVLFES…ILEPAEDDAS (178 aa)). A disordered region spans residues 609–767 (KLSGDQAKPP…NADAEPFFVI (159 aa)). Basic and acidic residues-rich tracts occupy residues 636-645 (CDSHDSDDAH) and 659-681 (LERE…ANRE). Residues 654 to 746 (KNKRKLEREK…RANSDNDDAM (93 aa)) adopt a coiled-coil conformation. Polar residues predominate over residues 690–700 (LKTQAAESSSN). Basic and acidic residues predominate over residues 701–746 (AKHEPPQDDHDEHDWNDDYRKLQKDKRQQRQRNKADRANSDNDDAM). A compositionally biased stretch (low complexity) spans 749-761 (NSDSDAAAANADA).

Belongs to the DEAD box helicase family. DDX55/SPB4 subfamily. As to quaternary structure, component of pre-60S ribosomal complexes.

Its subcellular location is the nucleus. The protein localises to the nucleolus. It carries out the reaction ATP + H2O = ADP + phosphate + H(+). ATP-binding RNA helicase involved in the biogenesis of 60S ribosomal subunits. Binds 90S pre-ribosomal particles and dissociates from pre-60S ribosomal particles after processing of 27SB pre-rRNA. Required for the normal formation of 18S rRNA through the processing of pre-rRNAs at sites A0, A1 and A2, and the normal formation of 25S and 5.8S rRNAs through the processing of pre-rRNAs at sites C1 and C2. The chain is ATP-dependent rRNA helicase SPB4 from Mycosarcoma maydis (Corn smut fungus).